We begin with the raw amino-acid sequence, 127 residues long: uncharacterized protein (127 aa).

Belongs to the transcriptional regulatory CopG/NikR family.

This is an uncharacterized protein from Methanocaldococcus jannaschii (strain ATCC 43067 / DSM 2661 / JAL-1 / JCM 10045 / NBRC 100440) (Methanococcus jannaschii).